The following is a 189-amino-acid chain: Selenoprotein S (189 aa).

The chain crosses the membrane as a helical span at residues 28 to 48; sequence SLLATYGWYIVFSCILLYVVF. A VCP/p97-interacting motif (VIM) region spans residues 78–90; that stretch reads RQEALAAARLKMQ. Positions 115–189 are disordered; sequence KIEMWDSMQE…RRGPSSGGUG (75 aa). At Ser-140 the chain carries Phosphoserine. Residues 159–173 are compositionally biased toward gly residues; the sequence is RGGGYNPLSGEGGGA. Sec-188 is a non-standard amino acid (selenocysteine).

Belongs to the selenoprotein S family. As to quaternary structure, interacts with DERL1 and (via VIM motif) with VCP, suggesting that it forms a membrane complex with DERL1 that serves as a receptor for VCP. Also interacts with DERL2, DERL3 and SELENOK. The SELENOK-SELENOS complex interacts with VCP. Interacts with CCDC47. In terms of processing, truncated SELENOS proteins produced by failed UGA/Sec decoding are ubiquitinated by the CRL2(KLHDC2) and CRL2(KLHDC3) complexes, which recognizes the glycine (Gly) at the C-terminus of truncated SELENOS proteins. Truncated SELENOS proteins produced by failed UGA/Sec decoding are also ubiquitinated by the CRL5(KLHDC1) complex.

It localises to the endoplasmic reticulum membrane. It is found in the cytoplasm. Its function is as follows. Involved in the degradation process of misfolded endoplasmic reticulum (ER) luminal proteins. Participates in the transfer of misfolded proteins from the ER to the cytosol, where they are destroyed by the proteasome in a ubiquitin-dependent manner. Probably acts by serving as a linker between DERL1, which mediates the retrotranslocation of misfolded proteins into the cytosol, and the ATPase complex VCP, which mediates the translocation and ubiquitination. The chain is Selenoprotein S from Homo sapiens (Human).